Reading from the N-terminus, the 196-residue chain is Carnitine operon protein CaiE (196 aa).

Residues 173–196 (TQPLRQMEENRPRLQGTTDVTPKR) form a disordered region. A compositionally biased stretch (polar residues) spans 187–196 (QGTTDVTPKR).

It belongs to the transferase hexapeptide repeat family.

It participates in amine and polyamine metabolism; carnitine metabolism. Functionally, overproduction of CaiE stimulates the activity of CaiB and CaiD. The chain is Carnitine operon protein CaiE from Escherichia coli O127:H6 (strain E2348/69 / EPEC).